A 344-amino-acid chain; its full sequence is tRNA N6-adenosine threonylcarbamoyltransferase (344 aa).

Fe cation-binding residues include His111 and His115. Substrate is bound by residues 134–138 (LVSGG), Asp167, Gly180, and Asn273. Asp301 contacts Fe cation.

It belongs to the KAE1 / TsaD family. It depends on Fe(2+) as a cofactor.

The protein localises to the cytoplasm. The enzyme catalyses L-threonylcarbamoyladenylate + adenosine(37) in tRNA = N(6)-L-threonylcarbamoyladenosine(37) in tRNA + AMP + H(+). In terms of biological role, required for the formation of a threonylcarbamoyl group on adenosine at position 37 (t(6)A37) in tRNAs that read codons beginning with adenine. Is involved in the transfer of the threonylcarbamoyl moiety of threonylcarbamoyl-AMP (TC-AMP) to the N6 group of A37, together with TsaE and TsaB. TsaD likely plays a direct catalytic role in this reaction. The polypeptide is tRNA N6-adenosine threonylcarbamoyltransferase (Cupriavidus necator (strain ATCC 17699 / DSM 428 / KCTC 22496 / NCIMB 10442 / H16 / Stanier 337) (Ralstonia eutropha)).